The chain runs to 505 residues: tRNA-2-methylthio-N(6)-dimethylallyladenosine synthase (505 aa).

Residues 10 to 126 enclose the MTTase N-terminal domain; sequence RSYEVRTYGC…LPALLDRARH (117 aa). Residues cysteine 19, cysteine 55, cysteine 89, cysteine 163, cysteine 167, and cysteine 170 each coordinate [4Fe-4S] cluster. The Radical SAM core domain occupies 149 to 385; the sequence is RESAYAGWVS…IALQEQITLE (237 aa). In terms of domain architecture, TRAM spans 388–459; the sequence is QKLVGAEVEL…PHHLVADTPV (72 aa).

It belongs to the methylthiotransferase family. MiaB subfamily. Monomer. It depends on [4Fe-4S] cluster as a cofactor.

It localises to the cytoplasm. The catalysed reaction is N(6)-dimethylallyladenosine(37) in tRNA + (sulfur carrier)-SH + AH2 + 2 S-adenosyl-L-methionine = 2-methylsulfanyl-N(6)-dimethylallyladenosine(37) in tRNA + (sulfur carrier)-H + 5'-deoxyadenosine + L-methionine + A + S-adenosyl-L-homocysteine + 2 H(+). Functionally, catalyzes the methylthiolation of N6-(dimethylallyl)adenosine (i(6)A), leading to the formation of 2-methylthio-N6-(dimethylallyl)adenosine (ms(2)i(6)A) at position 37 in tRNAs that read codons beginning with uridine. This Rhodococcus jostii (strain RHA1) protein is tRNA-2-methylthio-N(6)-dimethylallyladenosine synthase.